The following is a 409-amino-acid chain: uncharacterized protein (409 aa).

An N-terminal signal peptide occupies residues 1 to 39; that stretch reads MVSDSKLELPLPVNQQKPRRRRILKVHLLIAALILSAVG. His-67, Asp-69, Glu-181, His-250, and His-271 together coordinate Zn(2+).

This sequence belongs to the metallo-dependent hydrolases superfamily. Peptidase M19 family. In terms of assembly, interacts with dil1. Zn(2+) is required as a cofactor.

The enzyme catalyses an L-aminoacyl-L-amino acid + H2O = 2 an L-alpha-amino acid. This is an uncharacterized protein from Schizosaccharomyces pombe (strain 972 / ATCC 24843) (Fission yeast).